Here is a 1024-residue protein sequence, read N- to C-terminus: Protein translocase subunit SecA (1024 aa).

Residues Q143, 161 to 165 (GEGKT), and D661 each bind ATP. The disordered stretch occupies residues 970–1024 (HEEAGSVYNAQPDGEPESQASKQQPVVADHSKPGRNDLCPCGSGKKYKNCHGREA). Positions 1008, 1010, 1019, and 1020 each coordinate Zn(2+). Over residues 1014–1024 (KKYKNCHGREA) the composition is skewed to basic residues.

This sequence belongs to the SecA family. As to quaternary structure, monomer and homodimer. Part of the essential Sec protein translocation apparatus which comprises SecA, SecYEG and auxiliary proteins SecDF. Other proteins may also be involved. The cofactor is Zn(2+).

The protein resides in the cell inner membrane. It is found in the cytoplasm. The catalysed reaction is ATP + H2O + cellular proteinSide 1 = ADP + phosphate + cellular proteinSide 2.. In terms of biological role, part of the Sec protein translocase complex. Interacts with the SecYEG preprotein conducting channel. Has a central role in coupling the hydrolysis of ATP to the transfer of proteins into and across the cell membrane, serving as an ATP-driven molecular motor driving the stepwise translocation of polypeptide chains across the membrane. This Chlorobium luteolum (strain DSM 273 / BCRC 81028 / 2530) (Pelodictyon luteolum) protein is Protein translocase subunit SecA.